The primary structure comprises 296 residues: Homoserine kinase (296 aa).

84-94 (PLARGLGSSSS) serves as a coordination point for ATP.

This sequence belongs to the GHMP kinase family. Homoserine kinase subfamily.

The protein localises to the cytoplasm. It catalyses the reaction L-homoserine + ATP = O-phospho-L-homoserine + ADP + H(+). It functions in the pathway amino-acid biosynthesis; L-threonine biosynthesis; L-threonine from L-aspartate: step 4/5. In terms of biological role, catalyzes the ATP-dependent phosphorylation of L-homoserine to L-homoserine phosphate. The sequence is that of Homoserine kinase from Lactococcus lactis subsp. lactis (strain IL1403) (Streptococcus lactis).